Consider the following 426-residue polypeptide: 3-phosphoshikimate 1-carboxyvinyltransferase (426 aa).

3-phosphoshikimate is bound by residues Lys-20, Ser-21, and Arg-25. Phosphoenolpyruvate is bound at residue Lys-20. Residues Gly-92 and Arg-120 each contribute to the phosphoenolpyruvate site. Positions 165, 167, 313, and 340 each coordinate 3-phosphoshikimate. Gln-167 contributes to the phosphoenolpyruvate binding site. Asp-313 (proton acceptor) is an active-site residue. Positions 344 and 386 each coordinate phosphoenolpyruvate.

This sequence belongs to the EPSP synthase family. Monomer.

The protein localises to the cytoplasm. It catalyses the reaction 3-phosphoshikimate + phosphoenolpyruvate = 5-O-(1-carboxyvinyl)-3-phosphoshikimate + phosphate. Its pathway is metabolic intermediate biosynthesis; chorismate biosynthesis; chorismate from D-erythrose 4-phosphate and phosphoenolpyruvate: step 6/7. In terms of biological role, catalyzes the transfer of the enolpyruvyl moiety of phosphoenolpyruvate (PEP) to the 5-hydroxyl of shikimate-3-phosphate (S3P) to produce enolpyruvyl shikimate-3-phosphate and inorganic phosphate. This is 3-phosphoshikimate 1-carboxyvinyltransferase from Brevibacillus brevis (strain 47 / JCM 6285 / NBRC 100599).